We begin with the raw amino-acid sequence, 316 residues long: N-acetylmuramic acid 6-phosphate etherase (316 aa).

Residues 68–231 (ITDRLRSGGR…STCAMVRLGK (164 aa)) form the SIS domain. The active-site Proton donor is E96. The active site involves E127.

The protein belongs to the GCKR-like family. MurNAc-6-P etherase subfamily. As to quaternary structure, homodimer.

The catalysed reaction is N-acetyl-D-muramate 6-phosphate + H2O = N-acetyl-D-glucosamine 6-phosphate + (R)-lactate. The protein operates within amino-sugar metabolism; N-acetylmuramate degradation. Specifically catalyzes the cleavage of the D-lactyl ether substituent of MurNAc 6-phosphate, producing GlcNAc 6-phosphate and D-lactate. The chain is N-acetylmuramic acid 6-phosphate etherase from Prochlorococcus marinus (strain MIT 9313).